Reading from the N-terminus, the 512-residue chain is N-acetyltryptophan 6-hydroxylase ivoC (512 aa).

Residues 6–26 (LVFSFPAWALLLVLTLLYTLY) form a helical membrane-spanning segment. Residue Asn-118 is glycosylated (N-linked (GlcNAc...) asparagine). Cys-453 contacts heme.

Belongs to the cytochrome P450 family. It depends on heme as a cofactor.

It localises to the membrane. It functions in the pathway pigment biosynthesis. In terms of biological role, N-acetyltryptophan 6-hydroxylase; part of the pathway that mediates the biosynthesis of the gray-brown conidiophore pigment. The first step of the pathway is performed by the nonribosomal peptide synthetase ivoA that catalyzes ATP-dependent unidirectional stereoinversion of L-tryptophan to D-tryptophan with complete conversion. While the stereoinversion is catalyzed by the epimerization (E) domain of ivoA, the terminal condensation (C) domain stereoselectively hydrolyzes D-tryptophanyl-S-phosphopantetheine thioester and thus represents a non-canonical C domain function. D-tryptophan is acetylated, probably by an endogenous acetyltransferase. N-acetyltryptophan is further 6-hydroxylated into N-acetyl-6-hydroxytryptophan (AHT) by the cytochrome P450 monooxygenase ivoC. N-acetyl-6-hydroxytryptophan is substrate of the N-acetyl-6-hydroxytryptophan oxidase ivoB to produce the gray-brown conidiophore pigment. This chain is N-acetyltryptophan 6-hydroxylase ivoC, found in Emericella nidulans (strain FGSC A4 / ATCC 38163 / CBS 112.46 / NRRL 194 / M139) (Aspergillus nidulans).